A 1251-amino-acid polypeptide reads, in one-letter code: Cyclic nucleotide-gated channel beta-1 (1251 aa).

Disordered stretches follow at residues 1-75 (MLGW…QETK), 121-151 (ITED…EAQD), 172-252 (QPPK…TRDP), and 314-561 (EDAH…STNS). Over 1–656 (MLGWVQRVLP…SIDPLTNLMY (656 aa)) the chain is Cytoplasmic. Over residues 23–50 (EEEEVEPEPEMEAEVEPEPNPEEAETES) the composition is skewed to acidic residues. The span at 238 to 247 (GSQAQTSSLP) shows a compositional bias: polar residues. Positions 335–352 (EENKAVEKMPRELSRIEE) are enriched in basic and acidic residues. Acidic residues predominate over residues 353 to 373 (EKEDEEEEEEEEEEEEEEEVT). Basic and acidic residues predominate over residues 404–423 (KLWEEVGEEAKKEAEEKAKE). Positions 424–434 (EAEEVAEEEAE) are enriched in acidic residues. The span at 435–446 (KEPQDWAETKEE) shows a compositional bias: basic and acidic residues. A calmodulin-binding CaM1 region spans residues 557 to 567 (ASTNSAIINDR). The IQ-like motif lies at 568 to 578 (LQELVKLFKER). The interval 585 to 619 (KLIDPDVTSDEESPKPSPAKKAPEPAPDTKPAEAE) is disordered. A helical membrane pass occupies residues 657-678 (VLWLFFVVMAWNWNCWLIPVRW). Residues 679–687 (AFPYQTPDN) lie on the Extracellular side of the membrane. The helical transmembrane segment at 688-709 (IHHWLLMDYLCDLIYFLDITVF) threads the bilayer. At 710–724 (QTRLQFVRGGDIITD) the chain is on the cytoplasmic side. Residues 725–744 (KKDMRNNYLKSRRFKMDLLS) traverse the membrane as a helical segment. Topologically, residues 745–760 (LLPLDFLYLKVGVNPL) are extracellular. Residues 761–773 (LRLPRCLKYMAFF) traverse the membrane as a helical segment. The Cytoplasmic portion of the chain corresponds to 774 to 785 (EFNSRLESILSK). The chain crosses the membrane as a helical span at residues 786–808 (AYVYRVIRTTAYLLYSLHLNSCL). The tract at residues 786 to 885 (AYVYRVIRTT…IGQMRDVVGA (100 aa)) is ion conduction pathway. Residues 809-831 (YYWASAYQGLGSTHWVYDGVGNS) lie on the Extracellular side of the membrane. 2 consecutive transmembrane segments (helical) span residues 832 to 858 (YIRC…LFEI) and 859 to 884 (VFQL…DVVG). At 885–1251 (AATAGQTYYR…MPEEREEKAE (367 aa)) the chain is on the cytoplasmic side. The interval 888 to 964 (AGQTYYRSCM…NIVSKVALFQ (77 aa)) is C-linker. Residues 968-1084 (RQMIFDMLKR…LLRKKARRML (117 aa)) form a cyclic nucleotide-binding domain region. Positions 1029, 1030, 1032, 1042, and 1043 each coordinate 3',5'-cyclic GMP. Residue R1042 participates in 3',5'-cyclic AMP binding. Positions 1148–1154 (QQELVEQ) are calmodulin-binding CaM2. The interval 1151 to 1251 (LVEQAKSSQD…MPEEREEKAE (101 aa)) is disordered. Residues 1183-1203 (PPAPRTPPEPPGSPPSSPPPA) are compositionally biased toward pro residues. Positions 1242–1251 (MPEEREEKAE) are enriched in basic and acidic residues.

It belongs to the cyclic nucleotide-gated cation channel (TC 1.A.1.5) family. CNGB1 subfamily. The rod cyclic nucleotide-gated channel is a heterotetramer composed of CNGA1 and CNGB1 subunits with 3:1 stoichiometry. CNGA1:CNGB1 channel binds Ca(2+)-bound CALM1 via CaM1 and CaM2 regions of the CNGB1 subunit; this interaction modulates the affinity of the channel for cNMPs in response to intracellular Ca(2+) levels. The olfactory cyclic nucleotide-gated channel is a heterotetramer composed of CNGA2, CNGA4 and CNGB1 subunits with 2:1:1 stoichiometry.

The protein localises to the cell membrane. The protein resides in the cell projection. It is found in the cilium membrane. The catalysed reaction is Ca(2+)(in) = Ca(2+)(out). The enzyme catalyses Na(+)(in) = Na(+)(out). It catalyses the reaction K(+)(in) = K(+)(out). It carries out the reaction NH4(+)(in) = NH4(+)(out). The catalysed reaction is Rb(+)(in) = Rb(+)(out). The enzyme catalyses Li(+)(in) = Li(+)(out). It catalyses the reaction Cs(+)(in) = Cs(+)(out). Its function is as follows. Pore-forming subunit of the rod cyclic nucleotide-gated channel. Mediates rod photoresponses at dim light converting transient changes in intracellular cGMP levels into electrical signals. In the dark, cGMP levels are high and keep the channel open enabling a steady inward current carried by Na(+) and Ca(2+) ions that leads to membrane depolarization and neurotransmitter release from synaptic terminals. Upon photon absorption cGMP levels decline leading to channel closure and membrane hyperpolarization that ultimately slows neurotransmitter release and signals the presence of light, the end point of the phototransduction cascade. Pore-forming subunit of the olfactory cyclic nucleotide-gated channel. Operates in the cilia of olfactory sensory neurons where chemical stimulation of the odorant is converted to an electrical signal. Mediates odorant-induced cAMP-dependent Ca(2+) influx triggering neuron depolarization. The rise of intracellular Ca(2+) levels potentiates the olfactory response by activating Ca(2+)-dependent Cl(-) channels, but it also serves as a negative feedback signal to desensitize the channel for rapid adaptation to odorants. Conducts cGMP- and cAMP-gated ion currents, with permeability for monovalent and divalent cations. The selectivity for Ca(2+) over Na(+) increases with cGMP concentrations, whereas the selectivity among monovalent ions is independent of the cGMP levels. In terms of biological role, high affinity rod photoreceptor phosphodiesterase (PDE6)-binding protein that modulates its catalytic properties: it is a regulator of spontaneous activation of rod PDE6, thereby serving to lower rod photoreceptor 'dark noise' and allowing these sensory cells to operate at the single photon detection limit. The sequence is that of Cyclic nucleotide-gated channel beta-1 from Homo sapiens (Human).